The sequence spans 389 residues: Innexin-6 (389 aa).

The next 4 membrane-spanning stretches (helical) occupy residues 36–56 (VVIL…GDPI), 111–131 (VFAL…AMIA), 190–210 (LFYT…FYIL), and 276–296 (LFIF…VNCF).

It belongs to the pannexin family.

Its subcellular location is the cell membrane. It localises to the cell junction. The protein localises to the gap junction. Functionally, structural component of the gap junctions. This Caenorhabditis elegans protein is Innexin-6 (inx-6).